A 125-amino-acid polypeptide reads, in one-letter code: Plastocyanin (125 aa).

Positions 1-34 (MKVLASFARRLSLFAVAAVLCVGSFFLSAAPASA) are cleaved as a signal peptide. Residues 35 to 125 (QTVAIKMGAD…AGMVGKIVVQ (91 aa)) enclose the Plastocyanin-like domain. Cu cation is bound by residues histidine 73, cysteine 110, histidine 113, and methionine 118.

Belongs to the plastocyanin family. Requires Cu(2+) as cofactor.

It is found in the cellular thylakoid membrane. Participates in electron transfer between P700 and the cytochrome b6-f complex in photosystem I. This Synechococcus elongatus (strain ATCC 33912 / PCC 7942 / FACHB-805) (Anacystis nidulans R2) protein is Plastocyanin (petE).